The primary structure comprises 408 residues: NADH-quinone oxidoreductase subunit D (408 aa).

This sequence belongs to the complex I 49 kDa subunit family. In terms of assembly, NDH-1 is composed of 14 different subunits. Subunits NuoB, C, D, E, F, and G constitute the peripheral sector of the complex.

The protein resides in the cell inner membrane. The catalysed reaction is a quinone + NADH + 5 H(+)(in) = a quinol + NAD(+) + 4 H(+)(out). Its function is as follows. NDH-1 shuttles electrons from NADH, via FMN and iron-sulfur (Fe-S) centers, to quinones in the respiratory chain. The immediate electron acceptor for the enzyme in this species is believed to be ubiquinone. Couples the redox reaction to proton translocation (for every two electrons transferred, four hydrogen ions are translocated across the cytoplasmic membrane), and thus conserves the redox energy in a proton gradient. In Campylobacter jejuni subsp. jejuni serotype O:6 (strain 81116 / NCTC 11828), this protein is NADH-quinone oxidoreductase subunit D.